Reading from the N-terminus, the 80-residue chain is DNA-directed RNA polymerase subunit Rpo5 (80 aa).

The protein belongs to the archaeal Rpo5/eukaryotic RPB5 RNA polymerase subunit family. As to quaternary structure, part of the RNA polymerase complex.

It localises to the cytoplasm. It catalyses the reaction RNA(n) + a ribonucleoside 5'-triphosphate = RNA(n+1) + diphosphate. DNA-dependent RNA polymerase (RNAP) catalyzes the transcription of DNA into RNA using the four ribonucleoside triphosphates as substrates. The chain is DNA-directed RNA polymerase subunit Rpo5 from Thermofilum pendens (strain DSM 2475 / Hrk 5).